Reading from the N-terminus, the 192-residue chain is Ion-translocating oxidoreductase complex subunit A (192 aa).

Transmembrane regions (helical) follow at residues 5 to 25 (LLLLVGTVLVNNFVLVKFLGL), 39 to 59 (IGMSMATTFVLTLASILSYLV), 72 to 92 (LRTMAFILVIAVVVQFTEMLV), 102 to 122 (ALGIYLPLITTNCAVLGVALL), 134 to 154 (AIYGFGAAVGFSIVLILFSAM), and 171 to 191 (AIAMITAGLMSLAFMGFTGLV).

It belongs to the NqrDE/RnfAE family. The complex is composed of six subunits: RnfA, RnfB, RnfC, RnfD, RnfE and RnfG.

The protein localises to the cell inner membrane. Its function is as follows. Part of a membrane-bound complex that couples electron transfer with translocation of ions across the membrane. The chain is Ion-translocating oxidoreductase complex subunit A from Shewanella loihica (strain ATCC BAA-1088 / PV-4).